A 136-amino-acid polypeptide reads, in one-letter code: IQNPEPAVYQLKDPRSQDSTLCLFTDFDSQINVPKTMESGTFITDKTVLDMKAMDSKSNGAIAWSNQTSFTCQDIFKETNATYPSSDVPCDATLTEKSFETDMNLNFQNLSVMGLRILLLKVAGFNLLMTLRLWSS.

Positions 19–103 (STLCLFTDFD…LTEKSFETDM (85 aa)) constitute an Ig-like C1-type domain. Residues Cys-22 and Cys-72 are joined by a disulfide bond. Asn-66, Asn-80, and Asn-109 each carry an N-linked (GlcNAc...) asparagine glycan. A connecting peptide region spans residues 90–111 (CDATLTEKSFETDMNLNFQNLS). A helical transmembrane segment spans residues 111 to 131 (SVMGLRILLLKVAGFNLLMTL). The Cytoplasmic segment spans residues 132 to 136 (RLWSS).

Alpha-beta TR is a heterodimer composed of an alpha and beta chain; disulfide-linked. The alpha-beta TR is associated with the transmembrane signaling CD3 coreceptor proteins to form the TR-CD3 (TcR or TCR). The assembly of alpha-beta TR heterodimers with CD3 occurs in the endoplasmic reticulum where a single alpha-beta TR heterodimer associates with one CD3D-CD3E heterodimer, one CD3G-CD3E heterodimer and one CD247 homodimer forming a stable octameric structure. CD3D-CD3E and CD3G-CD3E heterodimers preferentially associate with TR alpha and TR beta chains, respectively. The association of the CD247 homodimer is the last step of TcR assembly in the endoplasmic reticulum and is required for transport to the cell surface.

The protein localises to the cell membrane. Functionally, constant region of T cell receptor (TR) alpha chain. Alpha-beta T cell receptors are antigen specific receptors which are essential to the immune response and are present on the cell surface of T lymphocytes. Recognize peptide-major histocompatibility (MH) (pMH) complexes that are displayed by antigen presenting cells (APC), a prerequisite for efficient T cell adaptive immunity against pathogens. Binding of alpha-beta TR to pMH complex initiates TR-CD3 clustering on the cell surface and intracellular activation of LCK that phosphorylates the ITAM motifs of CD3G, CD3D, CD3E and CD247 enabling the recruitment of ZAP70. In turn, ZAP70 phosphorylates LAT, which recruits numerous signaling molecules to form the LAT signalosome. The LAT signalosome propagates signal branching to three major signaling pathways, the calcium, the mitogen-activated protein kinase (MAPK) kinase and the nuclear factor NF-kappa-B (NF-kB) pathways, leading to the mobilization of transcription factors that are critical for gene expression and essential for T cell growth and differentiation. The T cell repertoire is generated in the thymus, by V-(D)-J rearrangement. This repertoire is then shaped by intrathymic selection events to generate a peripheral T cell pool of self-MH restricted, non-autoaggressive T cells. Post-thymic interaction of alpha-beta TR with the pMH complexes shapes TR structural and functional avidity. This Mus musculus (Mouse) protein is T-cell receptor alpha chain constant.